Reading from the N-terminus, the 236-residue chain is Uridylate kinase (236 aa).

12–15 is an ATP binding site; that stretch reads KISG. The tract at residues 20 to 25 is involved in allosteric activation by GTP; that stretch reads GKKGFG. Glycine 54 lines the UMP pocket. Glycine 55 and arginine 59 together coordinate ATP. Residues aspartate 72 and 133–140 contribute to the UMP site; that span reads TGNPYFST. ATP is bound by residues tyrosine 166 and aspartate 169.

Belongs to the UMP kinase family. Homohexamer.

The protein resides in the cytoplasm. It catalyses the reaction UMP + ATP = UDP + ADP. It functions in the pathway pyrimidine metabolism; CTP biosynthesis via de novo pathway; UDP from UMP (UMPK route): step 1/1. With respect to regulation, allosterically activated by GTP. Inhibited by UTP. Catalyzes the reversible phosphorylation of UMP to UDP. The chain is Uridylate kinase from Clostridium novyi (strain NT).